The primary structure comprises 997 residues: Kinesin-like protein KIF19 (997 aa).

The 336-residue stretch at 11–346 (QLTVALRIRP…LTYADRAKNI (336 aa)) folds into the Kinesin motor domain. 104 to 111 (GPTGCGKT) is a binding site for ATP. The stretch at 360–437 (HIAQYTSIIS…REQMDIRRQL (78 aa)) forms a coiled coil. Positions 468-491 (RARKWRDEHRKETYGKDDSEKDSD) are enriched in basic and acidic residues. Residues 468 to 503 (RARKWRDEHRKETYGKDDSEKDSDTGDDQSDFIEPP) are disordered. A coiled-coil region spans residues 508 to 577 (ARETIQILEG…ELEIENTEMQ (70 aa)). Disordered regions lie at residues 662-690 (NLTAEENLQEPDSDQESVRTFGSDNRNPI), 792-811 (GDRLQPMKERSNLSVHSMSE), and 848-890 (GGGS…SRSF). Basic and acidic residues-rich tracts occupy residues 792–802 (GDRLQPMKERS) and 869–880 (QKLEKREESLEV). Residues 861 to 889 (HRTQKKQAQKLEKREESLEVKRRKKRSRS) adopt a coiled-coil conformation.

This sequence belongs to the TRAFAC class myosin-kinesin ATPase superfamily. Kinesin family.

The protein resides in the cytoplasm. The protein localises to the cytoskeleton. Its subcellular location is the cell projection. It is found in the cilium. Functionally, plus end-directed microtubule-dependent motor protein that regulates the length of motile cilia by mediating depolymerization of microtubules at ciliary tips. The sequence is that of Kinesin-like protein KIF19 (kif19) from Xenopus laevis (African clawed frog).